A 1191-amino-acid polypeptide reads, in one-letter code: DNA-directed RNA polymerase subunit beta (1191 aa).

A disordered region spans residues 1164 to 1191; the sequence is EEEDLQPADALNIAPQPDTEEEPVESFE. Acidic residues predominate over residues 1181-1191; the sequence is DTEEEPVESFE.

The protein belongs to the RNA polymerase beta chain family. As to quaternary structure, the RNAP catalytic core consists of 2 alpha, 1 beta, 1 beta' and 1 omega subunit. When a sigma factor is associated with the core the holoenzyme is formed, which can initiate transcription.

It catalyses the reaction RNA(n) + a ribonucleoside 5'-triphosphate = RNA(n+1) + diphosphate. In terms of biological role, DNA-dependent RNA polymerase catalyzes the transcription of DNA into RNA using the four ribonucleoside triphosphates as substrates. The chain is DNA-directed RNA polymerase subunit beta from Lysinibacillus sphaericus (strain C3-41).